The sequence spans 225 residues: Ribulose-phosphate 3-epimerase (225 aa).

Substrate is bound at residue serine 10. The a divalent metal cation site is built by histidine 35, aspartate 37, and histidine 68. Aspartate 37 (proton acceptor) is an active-site residue. Residues histidine 68, 144-147 (GFGG), and 175-177 (DGG) each bind substrate. Residue aspartate 175 coordinates a divalent metal cation. Aspartate 175 functions as the Proton donor in the catalytic mechanism.

This sequence belongs to the ribulose-phosphate 3-epimerase family. It depends on a divalent metal cation as a cofactor.

It carries out the reaction D-ribulose 5-phosphate = D-xylulose 5-phosphate. It functions in the pathway carbohydrate degradation. In terms of biological role, catalyzes the reversible epimerization of D-ribulose 5-phosphate to D-xylulose 5-phosphate. This is Ribulose-phosphate 3-epimerase from Rhodospirillum rubrum.